The primary structure comprises 80 residues: Acyl carrier protein (80 aa).

Residues 4–79 (EDIFSKVKDI…DAVDFIASKA (76 aa)) form the Carrier domain. At S39 the chain carries O-(pantetheine 4'-phosphoryl)serine.

This sequence belongs to the acyl carrier protein (ACP) family. 4'-phosphopantetheine is transferred from CoA to a specific serine of apo-ACP by AcpS. This modification is essential for activity because fatty acids are bound in thioester linkage to the sulfhydryl of the prosthetic group.

The protein resides in the cytoplasm. It functions in the pathway lipid metabolism; fatty acid biosynthesis. In terms of biological role, carrier of the growing fatty acid chain in fatty acid biosynthesis. In Synechococcus elongatus (strain ATCC 33912 / PCC 7942 / FACHB-805) (Anacystis nidulans R2), this protein is Acyl carrier protein.